The sequence spans 110 residues: Phosphoribosyl-ATP pyrophosphatase (110 aa).

Belongs to the PRA-PH family.

It localises to the cytoplasm. The enzyme catalyses 1-(5-phospho-beta-D-ribosyl)-ATP + H2O = 1-(5-phospho-beta-D-ribosyl)-5'-AMP + diphosphate + H(+). The protein operates within amino-acid biosynthesis; L-histidine biosynthesis; L-histidine from 5-phospho-alpha-D-ribose 1-diphosphate: step 2/9. This is Phosphoribosyl-ATP pyrophosphatase from Clostridium botulinum (strain Kyoto / Type A2).